Here is a 365-residue protein sequence, read N- to C-terminus: DNA replication and repair protein RecF (365 aa).

30–37 (GRNAQGKT) lines the ATP pocket.

The protein belongs to the RecF family.

Its subcellular location is the cytoplasm. The RecF protein is involved in DNA metabolism; it is required for DNA replication and normal SOS inducibility. RecF binds preferentially to single-stranded, linear DNA. It also seems to bind ATP. The sequence is that of DNA replication and repair protein RecF from Streptococcus pneumoniae (strain CGSP14).